The chain runs to 200 residues: MLRWFSFGSNEGSEVAGNGWSVKPIGNMSIKKDDPVGFPQGYQCLLKVIIQLEKKDPTKSDVSELIAGWVKRYSGPHLLERLIKALIILTVPKLSRENIDNHVKLGGLFEGQVTFHFSSRDLIPTKYLSYATSIRTTVKGIYSYLSIEAELNPSSHQGTSVAKLLRASDVAKYYDNTLQSIFSQFEIKNVTITDDQIIFN.

In terms of assembly, homomultimer. Interacts with viral nucleocapsid.

The protein localises to the virion membrane. It is found in the host endomembrane system. The protein resides in the host nucleus membrane. Plays a major role in assembly and budding of virion, by recruiting cellular partners of the ESCRT complexes that play a key role in releasing the budding particle from the host membrane. Condensates the ribonucleocapsid core during virus assembly. In Tupaia (TUPV), this protein is Matrix protein (M).